The chain runs to 82 residues: Small ribosomal subunit protein uS17c (82 aa).

Belongs to the universal ribosomal protein uS17 family. As to quaternary structure, part of the 30S ribosomal subunit.

The protein localises to the plastid. Its subcellular location is the chloroplast. In terms of biological role, one of the primary rRNA binding proteins, it binds specifically to the 5'-end of 16S ribosomal RNA. The sequence is that of Small ribosomal subunit protein uS17c (rps17) from Cyanidioschyzon merolae (strain NIES-3377 / 10D) (Unicellular red alga).